The chain runs to 200 residues: Histone chaperone asf1b (200 aa).

This sequence belongs to the ASF1 family. As to quaternary structure, interacts with histone H3 and histone H4.

The protein resides in the nucleus. Histone chaperone that facilitates histone deposition and histone exchange and removal during nucleosome assembly and disassembly. This chain is Histone chaperone asf1b (asf1b), found in Xenopus tropicalis (Western clawed frog).